A 254-amino-acid polypeptide reads, in one-letter code: Pyridoxine 5'-phosphate synthase (254 aa).

Asn12 contributes to the 3-amino-2-oxopropyl phosphate binding site. Residue 14 to 15 (DH) participates in 1-deoxy-D-xylulose 5-phosphate binding. Arg23 is a binding site for 3-amino-2-oxopropyl phosphate. Residue His48 is the Proton acceptor of the active site. Positions 50 and 55 each coordinate 1-deoxy-D-xylulose 5-phosphate. The Proton acceptor role is filled by Glu75. Thr105 is a 1-deoxy-D-xylulose 5-phosphate binding site. Catalysis depends on His199, which acts as the Proton donor. Residues Gly200 and 221 to 222 (GF) each bind 3-amino-2-oxopropyl phosphate.

Belongs to the PNP synthase family. Homooctamer; tetramer of dimers.

It is found in the cytoplasm. It carries out the reaction 3-amino-2-oxopropyl phosphate + 1-deoxy-D-xylulose 5-phosphate = pyridoxine 5'-phosphate + phosphate + 2 H2O + H(+). It functions in the pathway cofactor biosynthesis; pyridoxine 5'-phosphate biosynthesis; pyridoxine 5'-phosphate from D-erythrose 4-phosphate: step 5/5. Catalyzes the complicated ring closure reaction between the two acyclic compounds 1-deoxy-D-xylulose-5-phosphate (DXP) and 3-amino-2-oxopropyl phosphate (1-amino-acetone-3-phosphate or AAP) to form pyridoxine 5'-phosphate (PNP) and inorganic phosphate. This Rhodopseudomonas palustris (strain HaA2) protein is Pyridoxine 5'-phosphate synthase.